Reading from the N-terminus, the 205-residue chain is Methylthioribulose-1-phosphate dehydratase (205 aa).

2 residues coordinate Zn(2+): histidine 96 and histidine 98.

This sequence belongs to the aldolase class II family. MtnB subfamily. Requires Zn(2+) as cofactor.

It carries out the reaction 5-(methylsulfanyl)-D-ribulose 1-phosphate = 5-methylsulfanyl-2,3-dioxopentyl phosphate + H2O. Its pathway is amino-acid biosynthesis; L-methionine biosynthesis via salvage pathway; L-methionine from S-methyl-5-thio-alpha-D-ribose 1-phosphate: step 2/6. Functionally, catalyzes the dehydration of methylthioribulose-1-phosphate (MTRu-1-P) into 2,3-diketo-5-methylthiopentyl-1-phosphate (DK-MTP-1-P). The sequence is that of Methylthioribulose-1-phosphate dehydratase from Pseudomonas paraeruginosa (strain DSM 24068 / PA7) (Pseudomonas aeruginosa (strain PA7)).